Here is a 919-residue protein sequence, read N- to C-terminus: Coiled-coil domain-containing protein 66 (919 aa).

4 disordered regions span residues 145-166 (KEET…KDEN), 456-505 (ERDR…RERE), 724-744 (ERNN…LPSP), and 762-816 (LKSD…EPSH). Over residues 150–161 (QDSLHLNNTSNQ) the composition is skewed to polar residues. Residues 467–558 (HQKAITAQVE…EQRIRELAQK (92 aa)) are a coiled coil. The segment at 570 to 919 (GGYGLDDVSG…NQEENFNSSF (350 aa)) is mediates localization to cilia, centrosomes and spindle microtubules and the interaction with PCM1, CEP290, CEP104 and CSPP1.

Homodimer; disulfide-linked. Interacts with CEP290. Interacts with PCM1. Interacts with ARMC9, TOGARAM1, CSPP1 and CEP104. Interacts with CDK5RAP2, CEP152, CEP192, TBG1 and PRC1. As to expression, expressed in retina and blood. Expressed in retina, mainly in photoreceptors but also in outer plexiform and ganglion cell layers (at protein level).

It is found in the cytoplasm. The protein resides in the cytoskeleton. The protein localises to the microtubule organizing center. It localises to the centrosome. Its subcellular location is the centriolar satellite. It is found in the cell projection. The protein resides in the cilium. The protein localises to the cilium basal body. It localises to the cilium axoneme. Its subcellular location is the photoreceptor inner segment. It is found in the photoreceptor outer segment. Microtubule-binding protein required for ciliogenesis. May function in ciliogenesis by mediating the transport of proteins like BBS4 to the cilium, but also through the organization of the centriolar satellites. Required for the assembly of signaling-competent cilia with proper structure and length. Mediates this function in part by regulating transition zone assembly and basal body recruitment of the IFT-B complex. Cooperates with the ciliopathy proteins CSPP1 and CEP104 during cilium length regulation. Plays two important roles during cell division. First, is required for mitotic progression via regulation of spindle assembly, organization and orientation, levels of spindle microtubules (MTs), kinetochore-fiber integrity, and chromosome alignment. Second, functions during cytokinesis in part by regulating assembly and organization of central spindle and midbody MTs. Plays a role in retina morphogenesis and/or homeostasis. This chain is Coiled-coil domain-containing protein 66 (CCDC66), found in Canis lupus familiaris (Dog).